Consider the following 391-residue polypeptide: Dual-specificity RNA methyltransferase RlmN (391 aa).

Positions 1-20 (MTSVVADSLTETKTDSQKPI) are disordered. A compositionally biased stretch (basic and acidic residues) spans 10–20 (TETKTDSQKPI). The active-site Proton acceptor is Glu-120. Residues 126 to 366 (DADRGTLCIS…APVRRTRGQD (241 aa)) enclose the Radical SAM core domain. Cys-133 and Cys-371 form a disulfide bridge. Cys-140, Cys-144, and Cys-147 together coordinate [4Fe-4S] cluster. Residues 195 to 196 (GE), Ser-227, 249 to 251 (SLH), and Asn-328 contribute to the S-adenosyl-L-methionine site. The S-methylcysteine intermediate role is filled by Cys-371.

The protein belongs to the radical SAM superfamily. RlmN family. [4Fe-4S] cluster is required as a cofactor.

It is found in the cytoplasm. The enzyme catalyses adenosine(2503) in 23S rRNA + 2 reduced [2Fe-2S]-[ferredoxin] + 2 S-adenosyl-L-methionine = 2-methyladenosine(2503) in 23S rRNA + 5'-deoxyadenosine + L-methionine + 2 oxidized [2Fe-2S]-[ferredoxin] + S-adenosyl-L-homocysteine. It carries out the reaction adenosine(37) in tRNA + 2 reduced [2Fe-2S]-[ferredoxin] + 2 S-adenosyl-L-methionine = 2-methyladenosine(37) in tRNA + 5'-deoxyadenosine + L-methionine + 2 oxidized [2Fe-2S]-[ferredoxin] + S-adenosyl-L-homocysteine. Functionally, specifically methylates position 2 of adenine 2503 in 23S rRNA and position 2 of adenine 37 in tRNAs. m2A2503 modification seems to play a crucial role in the proofreading step occurring at the peptidyl transferase center and thus would serve to optimize ribosomal fidelity. This is Dual-specificity RNA methyltransferase RlmN from Zymomonas mobilis subsp. mobilis (strain ATCC 31821 / ZM4 / CP4).